We begin with the raw amino-acid sequence, 429 residues long: Citrate synthase (429 aa).

Active-site residues include His306 and Asp364.

Belongs to the citrate synthase family.

It catalyses the reaction oxaloacetate + acetyl-CoA + H2O = citrate + CoA + H(+). It participates in carbohydrate metabolism; tricarboxylic acid cycle; isocitrate from oxaloacetate: step 1/2. The chain is Citrate synthase (gltA) from Rhizobium meliloti (strain 1021) (Ensifer meliloti).